The primary structure comprises 505 residues: Pentatricopeptide repeat-containing protein At2g17033 (505 aa).

PPR repeat units lie at residues 243 to 277 (KTQAYKSMVSGLCNMDQPHDAERVIEEMRMEKIKP), 278 to 312 (GLFEYKSVLYGYGRLGLFDDMNRVVHRMGTEGHKI), and 313 to 347 (DTVCSNMVLSSYGAHDALPQMGSWLQKLKGFNVPF). The region spanning 413–503 (LDLHGMHLSS…AKGKTVKEWL (91 aa)) is the Smr domain.

The protein belongs to the PPR family. P subfamily.

The polypeptide is Pentatricopeptide repeat-containing protein At2g17033 (Arabidopsis thaliana (Mouse-ear cress)).